Reading from the N-terminus, the 440-residue chain is Glutamyl-tRNA reductase (440 aa).

Residues 55-58 (TCNR), S115, 120-122 (ETQ), and Q126 contribute to the substrate site. C56 (nucleophile) is an active-site residue. 199–204 (GSGEMG) serves as a coordination point for NADP(+).

It belongs to the glutamyl-tRNA reductase family. Homodimer.

The catalysed reaction is (S)-4-amino-5-oxopentanoate + tRNA(Glu) + NADP(+) = L-glutamyl-tRNA(Glu) + NADPH + H(+). The protein operates within porphyrin-containing compound metabolism; protoporphyrin-IX biosynthesis; 5-aminolevulinate from L-glutamyl-tRNA(Glu): step 1/2. Its function is as follows. Catalyzes the NADPH-dependent reduction of glutamyl-tRNA(Glu) to glutamate 1-semialdehyde (GSA). This chain is Glutamyl-tRNA reductase, found in Helicobacter hepaticus (strain ATCC 51449 / 3B1).